We begin with the raw amino-acid sequence, 85 residues long: Small ribosomal subunit protein bS20 (85 aa).

The protein belongs to the bacterial ribosomal protein bS20 family.

Its function is as follows. Binds directly to 16S ribosomal RNA. The chain is Small ribosomal subunit protein bS20 from Borrelia garinii subsp. bavariensis (strain ATCC BAA-2496 / DSM 23469 / PBi) (Borreliella bavariensis).